The following is a 625-amino-acid chain: Chaperone protein DnaK (625 aa).

Threonine 197 carries the post-translational modification Phosphothreonine; by autocatalysis. Residues 598–625 (AYAKEQGGTQQGTDTKKKDDDVIDAEVE) are disordered.

It belongs to the heat shock protein 70 family.

Functionally, acts as a chaperone. The protein is Chaperone protein DnaK of Helicobacter hepaticus (strain ATCC 51449 / 3B1).